We begin with the raw amino-acid sequence, 182 residues long: ATP-dependent protease subunit HslV (182 aa).

Residue threonine 6 is part of the active site. 3 residues coordinate Na(+): alanine 164, cysteine 167, and threonine 170.

It belongs to the peptidase T1B family. HslV subfamily. In terms of assembly, a double ring-shaped homohexamer of HslV is capped on each side by a ring-shaped HslU homohexamer. The assembly of the HslU/HslV complex is dependent on binding of ATP.

The protein localises to the cytoplasm. The enzyme catalyses ATP-dependent cleavage of peptide bonds with broad specificity.. With respect to regulation, allosterically activated by HslU binding. Protease subunit of a proteasome-like degradation complex believed to be a general protein degrading machinery. The protein is ATP-dependent protease subunit HslV of Borrelia garinii subsp. bavariensis (strain ATCC BAA-2496 / DSM 23469 / PBi) (Borreliella bavariensis).